The following is a 485-amino-acid chain: Eukaryotic translation initiation factor 3 subunit E (485 aa).

Positions 219-391 (NQPDGPDGIV…GEIHITKPVT (173 aa)) constitute a PCI domain. The disordered stretch occupies residues 444–485 (QGGGKSNKKGDYKKGDYKKGGDFKKGGDFKKGGDHKKRAWVK). Positions 451 to 475 (KKGDYKKGDYKKGGDFKKGGDFKKG) are enriched in basic and acidic residues. Residues 476-485 (GDHKKRAWVK) are compositionally biased toward basic residues.

This sequence belongs to the eIF-3 subunit E family. In terms of assembly, component of the eukaryotic translation initiation factor 3 (eIF-3) complex.

Its subcellular location is the cytoplasm. Component of the eukaryotic translation initiation factor 3 (eIF-3) complex, which is involved in protein synthesis of a specialized repertoire of mRNAs and, together with other initiation factors, stimulates binding of mRNA and methionyl-tRNAi to the 40S ribosome. The eIF-3 complex specifically targets and initiates translation of a subset of mRNAs involved in cell proliferation. The protein is Eukaryotic translation initiation factor 3 subunit E of Monosiga brevicollis (Choanoflagellate).